The following is a 177-amino-acid chain: Co-chaperone protein HscB homolog (177 aa).

In terms of domain architecture, J spans Asp-8–Leu-80.

Belongs to the HscB family. In terms of assembly, interacts with HscA and stimulates its ATPase activity.

Functionally, co-chaperone involved in the maturation of iron-sulfur cluster-containing proteins. Seems to help targeting proteins to be folded toward HscA. The chain is Co-chaperone protein HscB homolog from Aromatoleum aromaticum (strain DSM 19018 / LMG 30748 / EbN1) (Azoarcus sp. (strain EbN1)).